Reading from the N-terminus, the 490-residue chain is Probable cytosol aminopeptidase (490 aa).

Mn(2+) is bound by residues Lys257 and Asp262. The active site involves Lys269. Residues Asp281, Asp341, and Glu343 each coordinate Mn(2+). Residue Arg345 is part of the active site.

The protein belongs to the peptidase M17 family. Mn(2+) is required as a cofactor.

The protein localises to the cytoplasm. The catalysed reaction is Release of an N-terminal amino acid, Xaa-|-Yaa-, in which Xaa is preferably Leu, but may be other amino acids including Pro although not Arg or Lys, and Yaa may be Pro. Amino acid amides and methyl esters are also readily hydrolyzed, but rates on arylamides are exceedingly low.. The enzyme catalyses Release of an N-terminal amino acid, preferentially leucine, but not glutamic or aspartic acids.. Presumably involved in the processing and regular turnover of intracellular proteins. Catalyzes the removal of unsubstituted N-terminal amino acids from various peptides. This chain is Probable cytosol aminopeptidase, found in Prochlorococcus marinus (strain AS9601).